The following is a 337-amino-acid chain: Palmitoyltransferase ZDHHC15 (337 aa).

The Cytoplasmic portion of the chain corresponds to 1 to 20 (MRRGWKMALSGGLRCCRRVL). A helical transmembrane segment spans residues 21–41 (SWVPVLVIVLVVLWSYYAYVF). Residues 42–56 (ELCLVTVLSPAEKVI) lie on the Lumenal side of the membrane. A helical membrane pass occupies residues 57 to 77 (YLILYHAIFVFFAWTYWKSIF). The Cytoplasmic portion of the chain corresponds to 78-172 (TLPQQPNQKF…NNCIGFSNYK (95 aa)). The DHHC domain occupies 129–179 (RFCDRCHLIKPDRCHHCSVCAMCVLKMDHHCPWVNNCIGFSNYKFFLQFLA). Cysteine 131, cysteine 134, histidine 144, cysteine 145, cysteine 148, cysteine 151, and histidine 158 together coordinate Zn(2+). The active-site S-palmitoyl cysteine intermediate is the cysteine 159. Residue cysteine 165 coordinates Zn(2+). Residues 173-193 (FFLQFLAYSVLYCLYIATTVF) form a helical membrane-spanning segment. Over 194-210 (SYFIKYWRGELPSVRSK) the chain is Lumenal. The helical transmembrane segment at 211–234 (FHVLFLLFVACMFFVSLVILFGYH) threads the bilayer. The Cytoplasmic portion of the chain corresponds to 235–337 (CWLVSRNKTT…LSSLAVESET (103 aa)). Residues 293–337 (HSFPMRSMNESQNPLLANEEPWEDNEDESQDYPEGLSSLAVESET) form a disordered region. Acidic residues predominate over residues 312–323 (EPWEDNEDESQD).

It belongs to the DHHC palmitoyltransferase family. Post-translationally, autopalmitoylated (in vitro). In terms of tissue distribution, in brain, expressed in both excitatory and inhibitory neurons but not expressed by glial cells.

It is found in the golgi apparatus membrane. The protein resides in the postsynaptic density. The catalysed reaction is L-cysteinyl-[protein] + hexadecanoyl-CoA = S-hexadecanoyl-L-cysteinyl-[protein] + CoA. The enzyme catalyses L-cysteinyl-[protein] + tetradecanoyl-CoA = S-tetradecanoyl-L-cysteinyl-[protein] + CoA. It catalyses the reaction L-cysteinyl-[protein] + octadecanoyl-CoA = S-octadecanoyl-L-cysteinyl-[protein] + CoA. In terms of biological role, palmitoyltransferase that catalyzes the addition of palmitate onto various protein substrates. Has no stringent fatty acid selectivity and in addition to palmitate can also transfer onto target proteins myristate from tetradecanoyl-CoA and stearate from octadecanoyl-CoA. Palmitoylates IGF2R and SORT1, promoting their partitioning to an endosomal membrane subdomain where they can interact with the retromer cargo-selective complex. Thereby, regulates retrograde transport from endosomes to the Golgi apparatus of these lysosomal sorting receptors and plays a role in trafficking of lysosomal proteins. In the nervous system, catalyzes the palmitoylation of DLG4/PSD95 and regulates its synaptic clustering and function in synaptogenesis. Could be involved in the differentiation of dopaminergic neurons and the development of the diencephalon. Could also catalyze the palmitoylation of GAP43. Could also palmitoylate DNAJC5 and regulate its localization to the Golgi membrane. Could also palmitoylate FYN as shown in vitro. May palmitoylate CALHM3 subunit of gustatory voltage-gated ion channels and modulate channel gating and kinetics. This chain is Palmitoyltransferase ZDHHC15, found in Rattus norvegicus (Rat).